The chain runs to 356 residues: Protein-arginine kinase (356 aa).

The Phosphagen kinase C-terminal domain occupies 24 to 256 (IIISSRVRVA…RQILAQEQAA (233 aa)). ATP-binding positions include 27 to 31 (SSRVR), H93, R127, 178 to 182 (RASVM), and 209 to 214 (RGLYGE). An RDXXRA motif of the pArg binding pocket involved in allosteric regulation motif is present at residues 339–344 (RDIFRA).

This sequence belongs to the ATP:guanido phosphotransferase family.

It catalyses the reaction L-arginyl-[protein] + ATP = N(omega)-phospho-L-arginyl-[protein] + ADP + H(+). Its activity is regulated as follows. Appears to be allosterically activated by the binding of pArg-containing polypeptides to the pArg-binding pocket localized in the C-terminal domain of McsB. In terms of biological role, catalyzes the specific phosphorylation of arginine residues in proteins. The polypeptide is Protein-arginine kinase (Pelotomaculum thermopropionicum (strain DSM 13744 / JCM 10971 / SI)).